Reading from the N-terminus, the 207-residue chain is Small ribosomal subunit protein bS6c (207 aa).

The transit peptide at 1-59 (MASSLCVSNSTICPLPNVSSQPLLSFSHSLRPFISKSKPMCASIQKRDGSQFVVKSQAL) directs the protein to the chloroplast. The segment at 69 to 99 (GFGSDDDPTSPSGSGVSTALEDKPEPQCPPG) is disordered. Low complexity predominate over residues 77–86 (TSPSGSGVST).

This sequence belongs to the bacterial ribosomal protein bS6 family. As to quaternary structure, part of the 30S ribosomal subunit.

It localises to the plastid. Its subcellular location is the chloroplast. Binds together with bS18 to 16S ribosomal RNA. The polypeptide is Small ribosomal subunit protein bS6c (RPS6) (Arabidopsis thaliana (Mouse-ear cress)).